A 150-amino-acid polypeptide reads, in one-letter code: SsrA-binding protein (150 aa).

This sequence belongs to the SmpB family.

The protein localises to the cytoplasm. In terms of biological role, required for rescue of stalled ribosomes mediated by trans-translation. Binds to transfer-messenger RNA (tmRNA), required for stable association of tmRNA with ribosomes. tmRNA and SmpB together mimic tRNA shape, replacing the anticodon stem-loop with SmpB. tmRNA is encoded by the ssrA gene; the 2 termini fold to resemble tRNA(Ala) and it encodes a 'tag peptide', a short internal open reading frame. During trans-translation Ala-aminoacylated tmRNA acts like a tRNA, entering the A-site of stalled ribosomes, displacing the stalled mRNA. The ribosome then switches to translate the ORF on the tmRNA; the nascent peptide is terminated with the 'tag peptide' encoded by the tmRNA and targeted for degradation. The ribosome is freed to recommence translation, which seems to be the essential function of trans-translation. The polypeptide is SsrA-binding protein (Campylobacter jejuni (strain RM1221)).